An 86-amino-acid polypeptide reads, in one-letter code: Small ribosomal subunit protein bS20 (86 aa).

The interval 1 to 23 is disordered; that stretch reads MANIKSSKKDSIKSRKKKKLNAS.

It belongs to the bacterial ribosomal protein bS20 family.

Functionally, binds directly to 16S ribosomal RNA. This is Small ribosomal subunit protein bS20 from Buchnera aphidicola subsp. Baizongia pistaciae (strain Bp).